Consider the following 407-residue polypeptide: Na(+)-translocating NADH-quinone reductase subunit F (407 aa).

The helical transmembrane segment at 3–23 (IILGVVMFTLIVLALVLVILF) threads the bilayer. The region spanning 32-126 (GDITISINGD…DMDIELPEEI (95 aa)) is the 2Fe-2S ferredoxin-type domain. Residues Cys-69, Cys-75, Cys-78, and Cys-110 each contribute to the [2Fe-2S] cluster site. The 141-residue stretch at 129–269 (VKKWECTVIS…SGPFGEFFAK (141 aa)) folds into the FAD-binding FR-type domain. Positions 272 to 389 (DAEMVFIGGG…PMMNAAVIGM (118 aa)) are catalytic.

It belongs to the NqrF family. As to quaternary structure, composed of six subunits; NqrA, NqrB, NqrC, NqrD, NqrE and NqrF. It depends on [2Fe-2S] cluster as a cofactor. FAD serves as cofactor.

Its subcellular location is the cell inner membrane. The enzyme catalyses a ubiquinone + n Na(+)(in) + NADH + H(+) = a ubiquinol + n Na(+)(out) + NAD(+). Functionally, NQR complex catalyzes the reduction of ubiquinone-1 to ubiquinol by two successive reactions, coupled with the transport of Na(+) ions from the cytoplasm to the periplasm. The first step is catalyzed by NqrF, which accepts electrons from NADH and reduces ubiquinone-1 to ubisemiquinone by a one-electron transfer pathway. This Vibrio vulnificus (strain CMCP6) protein is Na(+)-translocating NADH-quinone reductase subunit F.